The chain runs to 81 residues: Large ribosomal subunit protein bL31B (81 aa).

This sequence belongs to the bacterial ribosomal protein bL31 family. Type B subfamily. In terms of assembly, part of the 50S ribosomal subunit.

This is Large ribosomal subunit protein bL31B (rpmE2) from Lactiplantibacillus plantarum (strain ATCC BAA-793 / NCIMB 8826 / WCFS1) (Lactobacillus plantarum).